The chain runs to 87 residues: X protein (87 aa).

The interval 5-16 (LRLTLLELVRRL) is nuclear export signal. A disordered region spans residues 18-87 (GNATIESGRL…PANRKGAAVE (70 aa)). Low complexity predominate over residues 36–48 (DTTTGTTGVTKTT).

As to quaternary structure, interacts with P and N proteins. These interactions presumably promote nuclear targeting of the X protein in infected cells. Interacts with host MAVS; this interaction inhibits MAVS-induced apoptosis. Post-translationally, phosphorylated.

It localises to the host nucleus. It is found in the host mitochondrion. Its function is as follows. Plays an essential role in the inhibition of host apoptosis. Mediates host mitochondria-mediated apoptosis through interaction with the mitochondrial antiviral signaling protein/MAVS and thereby promotes viral persistence in host central nervous system. Within the host nucleus, regulates viral RNA synthesis and polymerase complex assembly. This Borna disease virus 1 (BoDV-1) protein is X protein (P/X).